The chain runs to 294 residues: Acetylglutamate kinase (294 aa).

Substrate is bound by residues 63 to 64 (GG), Arg-85, and Asn-188.

This sequence belongs to the acetylglutamate kinase family. ArgB subfamily.

The protein localises to the cytoplasm. The catalysed reaction is N-acetyl-L-glutamate + ATP = N-acetyl-L-glutamyl 5-phosphate + ADP. It functions in the pathway amino-acid biosynthesis; L-arginine biosynthesis; N(2)-acetyl-L-ornithine from L-glutamate: step 2/4. Its function is as follows. Catalyzes the ATP-dependent phosphorylation of N-acetyl-L-glutamate. The chain is Acetylglutamate kinase from Methanococcus maripaludis (strain C6 / ATCC BAA-1332).